The sequence spans 583 residues: 2-succinyl-5-enolpyruvyl-6-hydroxy-3-cyclohexene-1-carboxylate synthase (583 aa).

It belongs to the TPP enzyme family. MenD subfamily. As to quaternary structure, homodimer. Requires Mg(2+) as cofactor. It depends on Mn(2+) as a cofactor. Thiamine diphosphate serves as cofactor.

The catalysed reaction is isochorismate + 2-oxoglutarate + H(+) = 5-enolpyruvoyl-6-hydroxy-2-succinyl-cyclohex-3-ene-1-carboxylate + CO2. It functions in the pathway quinol/quinone metabolism; 1,4-dihydroxy-2-naphthoate biosynthesis; 1,4-dihydroxy-2-naphthoate from chorismate: step 2/7. Its pathway is quinol/quinone metabolism; menaquinone biosynthesis. In terms of biological role, catalyzes the thiamine diphosphate-dependent decarboxylation of 2-oxoglutarate and the subsequent addition of the resulting succinic semialdehyde-thiamine pyrophosphate anion to isochorismate to yield 2-succinyl-5-enolpyruvyl-6-hydroxy-3-cyclohexene-1-carboxylate (SEPHCHC). The chain is 2-succinyl-5-enolpyruvyl-6-hydroxy-3-cyclohexene-1-carboxylate synthase from Roseiflexus sp. (strain RS-1).